Reading from the N-terminus, the 873-residue chain is Bifunctional uridylyltransferase/uridylyl-removing enzyme (873 aa).

Positions 1–332 (MKYLSPLSLS…HQGEQDDAII (332 aa)) are uridylyltransferase. A uridylyl-removing region spans residues 333–692 (IDDDFQRRGR…ISKNASRGGT (360 aa)). The 123-residue stretch at 451 to 573 (VDEHSIRLLK…VRDEERLDYL (123 aa)) folds into the HD domain. 2 consecutive ACT domains span residues 693–777 (EIFV…RPPR) and 800–873 (LMEF…RLSS).

Belongs to the GlnD family. The cofactor is Mg(2+).

It catalyses the reaction [protein-PII]-L-tyrosine + UTP = [protein-PII]-uridylyl-L-tyrosine + diphosphate. It carries out the reaction [protein-PII]-uridylyl-L-tyrosine + H2O = [protein-PII]-L-tyrosine + UMP + H(+). Uridylyltransferase (UTase) activity is inhibited by glutamine, while glutamine activates uridylyl-removing (UR) activity. Functionally, modifies, by uridylylation and deuridylylation, the PII regulatory proteins (GlnB and homologs), in response to the nitrogen status of the cell that GlnD senses through the glutamine level. Under low glutamine levels, catalyzes the conversion of the PII proteins and UTP to PII-UMP and PPi, while under higher glutamine levels, GlnD hydrolyzes PII-UMP to PII and UMP (deuridylylation). Thus, controls uridylylation state and activity of the PII proteins, and plays an important role in the regulation of nitrogen assimilation and metabolism. This chain is Bifunctional uridylyltransferase/uridylyl-removing enzyme, found in Aliivibrio fischeri (strain MJ11) (Vibrio fischeri).